The sequence spans 444 residues: Putative methylesterase 13, chloroplastic (444 aa).

3 disordered regions span residues 1 to 32, 49 to 90, and 124 to 176; these read MGNS…KYKY, PSLS…KDSH, and SVVY…QLVD. The N-terminal 60 residues, 1-60, are a transit peptide targeting the chloroplast; sequence MGNSFTCISHEQEQRPKKSSGGGGNNSGKYKYVRRLSLMPSFRRRTLLPSLSCSGSSSTS. Residues 49-64 show a composition bias toward low complexity; it reads PSLSCSGSSSTSSSKK. Residues 65–82 are compositionally biased toward basic residues; that stretch reads GGIKAKTKKIRERHHHHH. The segment covering 124 to 148 has biased composition (polar residues); sequence SVVYPSAQPSGTSSGPVSAVQTPKK. Positions 149–164 are enriched in low complexity; sequence SSAGFVRSSSSRQRSS. Residues 190 to 310 form the AB hydrolase-1 domain; that stretch reads FVLVHGGGFG…LFNQQLGSND (121 aa). D264 serves as the catalytic Acyl-ester intermediate. Residues D390 and H418 each act as charge relay system in the active site.

It belongs to the AB hydrolase superfamily. Methylesterase family.

It is found in the plastid. Its subcellular location is the chloroplast. Functionally, putative methylesterase. In Arabidopsis thaliana (Mouse-ear cress), this protein is Putative methylesterase 13, chloroplastic.